A 503-amino-acid polypeptide reads, in one-letter code: MEFSVKSGSPEKQRSACIVVGVFEPRRLSPIAEQLDKISDGYISALLRRGELEGKVGQTLLLHHVPNILSERILLIGCGKERELDERQYKQVIQKTINTLNDTGSMEAVCFLTELHVKGRNTYWKVRQAVETAKETLYTFDQLKSNKTEPRRPLRKMVFNVPTRRELTSGERAIQHGLAIASGIKAAKDLGNMPPNICNAAYLASQARQLADAFSTNTVTRVIGEQQMKELGMHAYLAVGHGSQNESLMSVIEYKGNPNKDAKPIVLVGKGLTFDSGGISIKPAEGMDEMKYDMCGAATVYGVMRVVAELQLPLNVVGVLAGCENMPGGRAYRPGDILTTMSGQTVEVLNTDAEGRLVLCDALTYVERFEPELVIDIATLTGACVVALGNHLTGLMSNHNPLAHELIGASEQAGDRAWRLPLGEEYYEQLDSNFADMANIGGRAGGAITAGCFLSRFTRKYSWAHLDIAGTAWRSGKNKGATGRPVALLSQFLLNRAGLNGDD.

Mn(2+) is bound by residues K270 and D275. Residue K282 is part of the active site. Mn(2+) is bound by residues D293, D352, and E354. R356 is a catalytic residue.

Belongs to the peptidase M17 family. Mn(2+) is required as a cofactor.

It localises to the cytoplasm. It carries out the reaction Release of an N-terminal amino acid, Xaa-|-Yaa-, in which Xaa is preferably Leu, but may be other amino acids including Pro although not Arg or Lys, and Yaa may be Pro. Amino acid amides and methyl esters are also readily hydrolyzed, but rates on arylamides are exceedingly low.. The enzyme catalyses Release of an N-terminal amino acid, preferentially leucine, but not glutamic or aspartic acids.. In terms of biological role, presumably involved in the processing and regular turnover of intracellular proteins. Catalyzes the removal of unsubstituted N-terminal amino acids from various peptides. The sequence is that of Probable cytosol aminopeptidase from Yersinia pseudotuberculosis serotype O:1b (strain IP 31758).